Consider the following 509-residue polypeptide: tRNA-2-methylthio-N(6)-dimethylallyladenosine synthase (509 aa).

The disordered stretch occupies residues 1 to 21 (MNEKQRIESGQVNPSDKKSEK). Residues 66–184 (RKFYIRTYGC…LPELLSEAYL (119 aa)) enclose the MTTase N-terminal domain. Positions 75, 111, 145, 221, 225, and 228 each coordinate [4Fe-4S] cluster. Positions 207 to 437 (RTGKIKGWVN…NEVVNEISAK (231 aa)) constitute a Radical SAM core domain. A TRAM domain is found at 440–503 (KEYEGQVVEV…TWSLDGEMVG (64 aa)).

It belongs to the methylthiotransferase family. MiaB subfamily. As to quaternary structure, monomer. [4Fe-4S] cluster serves as cofactor.

The protein resides in the cytoplasm. It catalyses the reaction N(6)-dimethylallyladenosine(37) in tRNA + (sulfur carrier)-SH + AH2 + 2 S-adenosyl-L-methionine = 2-methylsulfanyl-N(6)-dimethylallyladenosine(37) in tRNA + (sulfur carrier)-H + 5'-deoxyadenosine + L-methionine + A + S-adenosyl-L-homocysteine + 2 H(+). Catalyzes the methylthiolation of N6-(dimethylallyl)adenosine (i(6)A), leading to the formation of 2-methylthio-N6-(dimethylallyl)adenosine (ms(2)i(6)A) at position 37 in tRNAs that read codons beginning with uridine. The protein is tRNA-2-methylthio-N(6)-dimethylallyladenosine synthase of Bacillus licheniformis (strain ATCC 14580 / DSM 13 / JCM 2505 / CCUG 7422 / NBRC 12200 / NCIMB 9375 / NCTC 10341 / NRRL NRS-1264 / Gibson 46).